We begin with the raw amino-acid sequence, 420 residues long: Gamma-glutamyl phosphate reductase (420 aa).

This sequence belongs to the gamma-glutamyl phosphate reductase family.

It is found in the cytoplasm. It catalyses the reaction L-glutamate 5-semialdehyde + phosphate + NADP(+) = L-glutamyl 5-phosphate + NADPH + H(+). The protein operates within amino-acid biosynthesis; L-proline biosynthesis; L-glutamate 5-semialdehyde from L-glutamate: step 2/2. In terms of biological role, catalyzes the NADPH-dependent reduction of L-glutamate 5-phosphate into L-glutamate 5-semialdehyde and phosphate. The product spontaneously undergoes cyclization to form 1-pyrroline-5-carboxylate. The chain is Gamma-glutamyl phosphate reductase from Shewanella denitrificans (strain OS217 / ATCC BAA-1090 / DSM 15013).